Reading from the N-terminus, the 356-residue chain is MRRELLLEKIETYKAIMPWYVLDYYQSQLAVPYRFTTLYEYLKEYKRFFDWLMDADLTQAPKIADIDLSTLEHLTKKDLEAFVLYLRERPSLNTYSTKEGLSQTTINRTLSALSSLYKYLTEEVENDQGEPYFYRNVMKKVSTKKKKETLASRAENIKQKLFLGDETLAFLDYVDKEYEQKLSNRAKSSFRKNKERDLAIIALLLASGVRLSEAVNLDLKDVNLNMMIIEVIRKGGKRDSVNVAGFAKGYLESYLAVRQRRYKAEKQDLAFFLTEYRGVPNRMDASSIEKMVGKYSEDFKIRVTPHKLRHTLATRLYDATKSQVLVSHQLGHSSTQVTDLYTHIVNDEQKNALDNL.

Residues 16–121 (IMPWYVLDYY…ALSSLYKYLT (106 aa)) form the Core-binding (CB) domain. The region spanning 169–354 (AFLDYVDKEY…VNDEQKNALD (186 aa)) is the Tyr recombinase domain. Residues R210, K234, H306, R309, and H332 contribute to the active site. The active-site O-(3'-phospho-DNA)-tyrosine intermediate is Y341.

Belongs to the 'phage' integrase family. XerS subfamily.

The protein localises to the cytoplasm. FtsK is required for recombination. Functionally, site-specific tyrosine recombinase, which acts by catalyzing the cutting and rejoining of the recombining DNA molecules. Essential to convert dimers of the bacterial chromosome into monomers to permit their segregation at cell division. The polypeptide is Tyrosine recombinase XerS (Streptococcus pyogenes serotype M49 (strain NZ131)).